The following is a 270-amino-acid chain: Decarboxylase NovR (270 aa).

Belongs to the aldolase class II family.

The protein operates within antibiotic biosynthesis; novobiocin biosynthesis. Its function is as follows. May mediate the 2 consecutive oxidative decarboxylation steps in the biosynthesis of the prenylated hydroxybenzoic acid moiety of novobiocin, an aminocoumarin family antibiotic that targets bacterial DNA gyrases. This Streptomyces niveus (Streptomyces spheroides) protein is Decarboxylase NovR (novR).